The primary structure comprises 201 residues: MSRYRGPRFKKIRRLGALPGLTNKRPRAGSDLRNQSRSGKKSQYRIRLEEKQKLRFHYGLTERQLLKYVRIAGKAKGSTGQVLLQLLEMRLDNILFRLGMAPTIPGARQLVNHRHILVNGRIVDIASYRCKPRDIITARDEENSRTLIQNSLDSSSHDELPKHLTLHPFQYKGLVNQIIDSKWVGLKINELLVVEYYSRQT.

The disordered stretch occupies residues 15-43 (LGALPGLTNKRPRAGSDLRNQSRSGKKSQ). An S4 RNA-binding domain is found at 89–152 (MRLDNILFRL…NSRTLIQNSL (64 aa)).

Belongs to the universal ribosomal protein uS4 family. As to quaternary structure, part of the 30S ribosomal subunit. Contacts protein S5. The interaction surface between S4 and S5 is involved in control of translational fidelity.

The protein resides in the plastid. It localises to the chloroplast. Its function is as follows. One of the primary rRNA binding proteins, it binds directly to 16S rRNA where it nucleates assembly of the body of the 30S subunit. Functionally, with S5 and S12 plays an important role in translational accuracy. The chain is Small ribosomal subunit protein uS4c (rps4) from Panax ginseng (Korean ginseng).